The sequence spans 389 residues: S-adenosylmethionine synthase (389 aa).

Residue His18 coordinates ATP. Mg(2+) is bound at residue Asp20. K(+) is bound at residue Glu46. Residues Glu59 and Gln103 each coordinate L-methionine. The tract at residues 103-113 (QSADIAMGVDS) is flexible loop. Residues 168–170 (DSK), Asp244, 250–251 (RK), Ala267, and Lys271 each bind ATP. Position 244 (Asp244) interacts with L-methionine. Lys275 lines the L-methionine pocket.

This sequence belongs to the AdoMet synthase family. Homotetramer; dimer of dimers. It depends on Mg(2+) as a cofactor. K(+) serves as cofactor.

The protein localises to the cytoplasm. The enzyme catalyses L-methionine + ATP + H2O = S-adenosyl-L-methionine + phosphate + diphosphate. The protein operates within amino-acid biosynthesis; S-adenosyl-L-methionine biosynthesis; S-adenosyl-L-methionine from L-methionine: step 1/1. Catalyzes the formation of S-adenosylmethionine (AdoMet) from methionine and ATP. The overall synthetic reaction is composed of two sequential steps, AdoMet formation and the subsequent tripolyphosphate hydrolysis which occurs prior to release of AdoMet from the enzyme. The chain is S-adenosylmethionine synthase from Pelagibacter ubique (strain HTCC1062).